The following is a 118-amino-acid chain: Myotrophin (118 aa).

C2 bears the N-acetylcysteine mark. An ANK 1 repeat occupies 2 to 30 (CDKEFMWALKNGDLDEVKDYVAKGEDVNR). N6-acetyllysine is present on residues K4, K11, and K24. T31 is modified (phosphothreonine). ANK repeat units follow at residues 34-66 (GGRK…APDK) and 67-99 (HHIT…VKGP).

It belongs to the myotrophin family. In terms of assembly, interacts with the heterodimer formed by CAPZA1 and CAPZB. Interacts with RELA.

Its subcellular location is the cytoplasm. The protein localises to the nucleus. It is found in the perinuclear region. In terms of biological role, plays a role in the regulation of the growth of actin filaments. Inhibits the activity of the F-actin-capping protein complex formed by the CAPZA1 and CAPZB heterodimer. Promotes dimerization of NF-kappa-B subunits and regulates NF-kappa-B transcription factor activity. Promotes growth of cardiomyocytes, but not cardiomyocyte proliferation. Promotes cardiac muscle hypertrophy. The polypeptide is Myotrophin (Mtpn) (Rattus norvegicus (Rat)).